A 176-amino-acid polypeptide reads, in one-letter code: MRERQNSYEYEDLLACGRGELFGPGNAQLPLPPMLMFDRIVEITETGGEFGKGVIRAELDVKPDLWFFGCHFKGDPVMPGCLGLDALWQMVGFFLGWTGGSGRGRALGLGDLKFSGQVLPHVMRVQYHIDMKRIMRSRLVLGVADGWLSTDGEIIYRATDLKVGLFQQDAAAQAGK.

H71 is an active-site residue.

This sequence belongs to the thioester dehydratase family. FabA subfamily. In terms of assembly, homodimer.

It is found in the cytoplasm. The enzyme catalyses a (3R)-hydroxyacyl-[ACP] = a (2E)-enoyl-[ACP] + H2O. The catalysed reaction is (3R)-hydroxydecanoyl-[ACP] = (2E)-decenoyl-[ACP] + H2O. It carries out the reaction (2E)-decenoyl-[ACP] = (3Z)-decenoyl-[ACP]. The protein operates within lipid metabolism; fatty acid biosynthesis. Necessary for the introduction of cis unsaturation into fatty acids. Catalyzes the dehydration of (3R)-3-hydroxydecanoyl-ACP to E-(2)-decenoyl-ACP and then its isomerization to Z-(3)-decenoyl-ACP. Can catalyze the dehydratase reaction for beta-hydroxyacyl-ACPs with saturated chain lengths up to 16:0, being most active on intermediate chain length. The polypeptide is 3-hydroxydecanoyl-[acyl-carrier-protein] dehydratase (Afipia carboxidovorans (strain ATCC 49405 / DSM 1227 / KCTC 32145 / OM5) (Oligotropha carboxidovorans)).